A 339-amino-acid chain; its full sequence is Anthranilate phosphoribosyltransferase (339 aa).

Residues G79, 82-83, S87, 89-92, 107-115, and S119 contribute to the 5-phospho-alpha-D-ribose 1-diphosphate site; these read GD, NIST, and KHGNRSISS. G79 provides a ligand contact to anthranilate. Position 91 (S91) interacts with Mg(2+). N110 is a binding site for anthranilate. R165 is a binding site for anthranilate. Mg(2+) is bound by residues D224 and E225.

The protein belongs to the anthranilate phosphoribosyltransferase family. Homodimer. Mg(2+) is required as a cofactor.

It carries out the reaction N-(5-phospho-beta-D-ribosyl)anthranilate + diphosphate = 5-phospho-alpha-D-ribose 1-diphosphate + anthranilate. The protein operates within amino-acid biosynthesis; L-tryptophan biosynthesis; L-tryptophan from chorismate: step 2/5. In terms of biological role, catalyzes the transfer of the phosphoribosyl group of 5-phosphorylribose-1-pyrophosphate (PRPP) to anthranilate to yield N-(5'-phosphoribosyl)-anthranilate (PRA). The polypeptide is Anthranilate phosphoribosyltransferase (Listeria monocytogenes serovar 1/2a (strain ATCC BAA-679 / EGD-e)).